Here is a 2410-residue protein sequence, read N- to C-terminus: Genome polyprotein 1 (2410 aa).

The disordered stretch occupies residues 1–22 (MEQTLAQAVSRKSKTDTPMAEE). The Helicase ATP-binding domain occupies 474–632 (KMADANNCWS…AARKYPLHVE (159 aa)). Residue 487–494 (GHTGSGKS) participates in ATP binding. In terms of domain architecture, Helicase C-terminal spans 647–813 (GGGDLLDISK…NVPFYMNETF (167 aa)). Y1234 is subject to O-(5'-phospho-RNA)-tyrosine. The Peptidase C4 domain occupies 1359 to 1573 (ITLEASTGIL…CGYASHTALF (215 aa)). Active-site for nuclear inclusion protein A activity residues include H1404, D1440, and C1507. The RdRp catalytic domain maps to 1857 to 1980 (WLHGSGDGSR…AISPQFDEEF (124 aa)). Positions 2173-2200 (TRTPTEDDGKLKTPSGARIPSSAADGNW) are disordered.

Belongs to the bymoviruses polyprotein 1 family. Post-translationally, VPg is uridylylated by the polymerase and is covalently attached to the 5'-end of the genomic RNA. This uridylylated form acts as a nucleotide-peptide primer for the polymerase. The viral RNA1 of bymoviruses is expressed as a single polyprotein which undergoes post-translational proteolytic processing by the main proteinase NIa-pro resulting in the production of at least eight individual proteins.

It localises to the host cytoplasmic vesicle. Its subcellular location is the virion. The enzyme catalyses RNA(n) + a ribonucleoside 5'-triphosphate = RNA(n+1) + diphosphate. The catalysed reaction is Hydrolyzes glutaminyl bonds, and activity is further restricted by preferences for the amino acids in P6 - P1' that vary with the species of potyvirus, e.g. Glu-Xaa-Xaa-Tyr-Xaa-Gln-|-(Ser or Gly) for the enzyme from tobacco etch virus. The natural substrate is the viral polyprotein, but other proteins and oligopeptides containing the appropriate consensus sequence are also cleaved.. Functionally, indispensable for virus replication. Mediates the cap-independent, EIF4E-dependent translation of viral genomic RNAs. Binds to the cap-binding site of host EIF4E and thus interferes with the host EIF4E-dependent mRNA export and translation. VPg-RNA directly binds EIF4E and is a template for transcription. Also forms trimeric complexes with EIF4E-EIF4G, which are templates for translation. In terms of biological role, has RNA-binding and proteolytic activities. Its function is as follows. An RNA-dependent RNA polymerase that plays an essential role in the virus replication. The polypeptide is Genome polyprotein 1 (Hordeum vulgare (Barley)).